Consider the following 207-residue polypeptide: Ribosome maturation factor RimM (207 aa).

Residues 114-207 (DDEYYWVDLI…RIDSDWPLDY (94 aa)) enclose the PRC barrel domain.

It belongs to the RimM family. Binds ribosomal protein uS19.

It localises to the cytoplasm. In terms of biological role, an accessory protein needed during the final step in the assembly of 30S ribosomal subunit, possibly for assembly of the head region. Essential for efficient processing of 16S rRNA. May be needed both before and after RbfA during the maturation of 16S rRNA. It has affinity for free ribosomal 30S subunits but not for 70S ribosomes. This Bordetella bronchiseptica (strain ATCC BAA-588 / NCTC 13252 / RB50) (Alcaligenes bronchisepticus) protein is Ribosome maturation factor RimM.